The primary structure comprises 100 residues: Large ribosomal subunit protein uL23 (100 aa).

This sequence belongs to the universal ribosomal protein uL23 family. In terms of assembly, part of the 50S ribosomal subunit. Contacts protein L29, and trigger factor when it is bound to the ribosome.

In terms of biological role, one of the early assembly proteins it binds 23S rRNA. One of the proteins that surrounds the polypeptide exit tunnel on the outside of the ribosome. Forms the main docking site for trigger factor binding to the ribosome. This chain is Large ribosomal subunit protein uL23, found in Rippkaea orientalis (strain PCC 8801 / RF-1) (Cyanothece sp. (strain PCC 8801)).